The chain runs to 753 residues: Polyribonucleotide nucleotidyltransferase (753 aa).

Positions 488 and 494 each coordinate Mg(2+). In terms of domain architecture, KH spans 555-614 (PKLYTMKINPEKIRDVIGKGGSTIRALTEETGTQIDIGEDGTITIASSDAAKADEAKRRI). Residues 624-692 (GKIYEGPVTK…EKGRVKLSLK (69 aa)) enclose the S1 motif domain. The interval 692–753 (KALTERPAGM…EGEQQQQQQQ (62 aa)) is disordered. Over residues 699–739 (AGMERSDRPAPAEREFRQPREPRQQREFREPREPREPRDGG) the composition is skewed to basic and acidic residues.

Belongs to the polyribonucleotide nucleotidyltransferase family. It depends on Mg(2+) as a cofactor.

Its subcellular location is the cytoplasm. It catalyses the reaction RNA(n+1) + phosphate = RNA(n) + a ribonucleoside 5'-diphosphate. Its function is as follows. Involved in mRNA degradation. Catalyzes the phosphorolysis of single-stranded polyribonucleotides processively in the 3'- to 5'-direction. This Delftia acidovorans (strain DSM 14801 / SPH-1) protein is Polyribonucleotide nucleotidyltransferase.